We begin with the raw amino-acid sequence, 174 residues long: Variant surface antigen B (174 aa).

A signal peptide spans 1 to 29; that stretch reads MKKSIFSKKLLVSFGSLVALASIPLIAIS. Cys30 carries N-palmitoyl cysteine lipidation. A lipid anchor (S-diacylglycerol cysteine) is attached at Cys30. A disordered region spans residues 32–174; it reads QTNTDKSQQP…SQDSGNGSTK (143 aa). Over residues 38–49 the composition is skewed to low complexity; it reads SQQPGSGSSTSG. Gly residues predominate over residues 50-75; it reads GQSGTGLGSGTTTGGQSGTTTGGRSG. Low complexity predominate over residues 76-97; sequence SGSSSSTTGGQTGTGSDSQDSG. 7 consecutive repeat copies span residues 88 to 99, 100 to 111, 112 to 123, 124 to 135, 136 to 147, 148 to 159, and 160 to 171. Residues 88–171 are 7 X 12 AA tandem repeats; that stretch reads GTGSDSQDSG…GSDSQDSGNG (84 aa). Residues 102–174 show a composition bias toward polar residues; sequence GSDSQDSGAK…SQDSGNGSTK (73 aa).

It is found in the cell membrane. Responsible for the antigenic diversity for host adaptation. In Mesomycoplasma hyorhinis (Mycoplasma hyorhinis), this protein is Variant surface antigen B (vlpB).